A 503-amino-acid chain; its full sequence is Aspartyl/glutamyl-tRNA(Asn/Gln) amidotransferase subunit B (503 aa).

It belongs to the GatB/GatE family. GatB subfamily. As to quaternary structure, heterotrimer of A, B and C subunits.

It carries out the reaction L-glutamyl-tRNA(Gln) + L-glutamine + ATP + H2O = L-glutaminyl-tRNA(Gln) + L-glutamate + ADP + phosphate + H(+). It catalyses the reaction L-aspartyl-tRNA(Asn) + L-glutamine + ATP + H2O = L-asparaginyl-tRNA(Asn) + L-glutamate + ADP + phosphate + 2 H(+). Its function is as follows. Allows the formation of correctly charged Asn-tRNA(Asn) or Gln-tRNA(Gln) through the transamidation of misacylated Asp-tRNA(Asn) or Glu-tRNA(Gln) in organisms which lack either or both of asparaginyl-tRNA or glutaminyl-tRNA synthetases. The reaction takes place in the presence of glutamine and ATP through an activated phospho-Asp-tRNA(Asn) or phospho-Glu-tRNA(Gln). The polypeptide is Aspartyl/glutamyl-tRNA(Asn/Gln) amidotransferase subunit B (Rhodococcus jostii (strain RHA1)).